A 465-amino-acid polypeptide reads, in one-letter code: Ribosomal oxygenase 2 (465 aa).

Positions 139–271 (QPQRFKDELW…NSWGDYLLDS (133 aa)) constitute a JmjC domain. Positions 179, 181, and 240 each coordinate Fe cation. Serine 309 is subject to Phosphoserine.

Belongs to the ROX family. MINA53 subfamily. Fe(2+) serves as cofactor.

The protein localises to the nucleus. Its subcellular location is the nucleolus. It carries out the reaction L-histidyl-[ribosomal protein uL15] + 2-oxoglutarate + O2 = (3S)-3-hydroxy-L-histidyl-[ribosomal protein uL15] + succinate + CO2. The enzyme catalyses L-histidyl-[protein] + 2-oxoglutarate + O2 = (3S)-3-hydroxy-L-histidyl-[protein] + succinate + CO2. Functionally, oxygenase that can act as both a histone lysine demethylase and a ribosomal histidine hydroxylase. Is involved in the demethylation of trimethylated 'Lys-9' on histone H3 (H3K9me3), leading to an increase in ribosomal RNA expression. Also catalyzes the hydroxylation of 60S ribosomal protein L27a on 'His-39'. May play an important role in cell growth and survival. May be involved in ribosome biogenesis, most likely during the assembly process of pre-ribosomal particles. This Rattus norvegicus (Rat) protein is Ribosomal oxygenase 2.